Consider the following 329-residue polypeptide: 4-hydroxythreonine-4-phosphate dehydrogenase (329 aa).

The substrate site is built by histidine 136 and threonine 137. The a divalent metal cation site is built by histidine 166, histidine 211, and histidine 266. Residues lysine 274, asparagine 283, and arginine 292 each coordinate substrate.

Belongs to the PdxA family. As to quaternary structure, homodimer. Requires Zn(2+) as cofactor. It depends on Mg(2+) as a cofactor. Co(2+) is required as a cofactor.

Its subcellular location is the cytoplasm. It carries out the reaction 4-(phosphooxy)-L-threonine + NAD(+) = 3-amino-2-oxopropyl phosphate + CO2 + NADH. It participates in cofactor biosynthesis; pyridoxine 5'-phosphate biosynthesis; pyridoxine 5'-phosphate from D-erythrose 4-phosphate: step 4/5. In terms of biological role, catalyzes the NAD(P)-dependent oxidation of 4-(phosphooxy)-L-threonine (HTP) into 2-amino-3-oxo-4-(phosphooxy)butyric acid which spontaneously decarboxylates to form 3-amino-2-oxopropyl phosphate (AHAP). The polypeptide is 4-hydroxythreonine-4-phosphate dehydrogenase (Pseudomonas putida (strain ATCC 47054 / DSM 6125 / CFBP 8728 / NCIMB 11950 / KT2440)).